A 135-amino-acid chain; its full sequence is ATP synthase epsilon chain (135 aa).

Belongs to the ATPase epsilon chain family. F-type ATPases have 2 components, CF(1) - the catalytic core - and CF(0) - the membrane proton channel. CF(1) has five subunits: alpha(3), beta(3), gamma(1), delta(1), epsilon(1). CF(0) has three main subunits: a, b and c.

The protein resides in the cell inner membrane. In terms of biological role, produces ATP from ADP in the presence of a proton gradient across the membrane. The chain is ATP synthase epsilon chain from Brucella suis (strain ATCC 23445 / NCTC 10510).